Consider the following 200-residue polypeptide: Probable GTP-binding protein EngB (200 aa).

The EngB-type G domain occupies 22–199 (NVAEVAFLGR…QDKITGYLFG (178 aa)). Residues 30–37 (GRSNVGKS), 57–61 (GKTQL), 85–88 (DLPG), 155–158 (TKID), and 177–180 (FLSN) contribute to the GTP site. The Mg(2+) site is built by serine 37 and threonine 59.

Belongs to the TRAFAC class TrmE-Era-EngA-EngB-Septin-like GTPase superfamily. EngB GTPase family. Requires Mg(2+) as cofactor.

Necessary for normal cell division and for the maintenance of normal septation. The sequence is that of Probable GTP-binding protein EngB from Aliarcobacter butzleri (strain RM4018) (Arcobacter butzleri).